A 484-amino-acid chain; its full sequence is Glutamyl-tRNA(Gln) amidotransferase subunit A (484 aa).

Active-site charge relay system residues include Lys-76 and Ser-151. Ser-175 functions as the Acyl-ester intermediate in the catalytic mechanism.

This sequence belongs to the amidase family. GatA subfamily. As to quaternary structure, heterotrimer of A, B and C subunits.

The enzyme catalyses L-glutamyl-tRNA(Gln) + L-glutamine + ATP + H2O = L-glutaminyl-tRNA(Gln) + L-glutamate + ADP + phosphate + H(+). Its function is as follows. Allows the formation of correctly charged Gln-tRNA(Gln) through the transamidation of misacylated Glu-tRNA(Gln) in organisms which lack glutaminyl-tRNA synthetase. The reaction takes place in the presence of glutamine and ATP through an activated gamma-phospho-Glu-tRNA(Gln). The polypeptide is Glutamyl-tRNA(Gln) amidotransferase subunit A (Alkalilimnicola ehrlichii (strain ATCC BAA-1101 / DSM 17681 / MLHE-1)).